Here is a 395-residue protein sequence, read N- to C-terminus: Putative 8-amino-7-oxononanoate synthase (395 aa).

Residue R22 participates in substrate binding. 109–110 is a pyridoxal 5'-phosphate binding site; that stretch reads GY. H139 serves as a coordination point for substrate. Pyridoxal 5'-phosphate is bound by residues S187, 212–215, and 241–244; these read DEAH and TFSK. N6-(pyridoxal phosphate)lysine is present on K244. T358 contributes to the substrate binding site.

Belongs to the class-II pyridoxal-phosphate-dependent aminotransferase family. BioF subfamily. Homodimer. Pyridoxal 5'-phosphate is required as a cofactor.

It carries out the reaction 6-carboxyhexanoyl-[ACP] + L-alanine + H(+) = (8S)-8-amino-7-oxononanoate + holo-[ACP] + CO2. It participates in cofactor biosynthesis; biotin biosynthesis. Its function is as follows. Catalyzes the decarboxylative condensation of pimeloyl-[acyl-carrier protein] and L-alanine to produce 8-amino-7-oxononanoate (AON), [acyl-carrier protein], and carbon dioxide. This Magnetococcus marinus (strain ATCC BAA-1437 / JCM 17883 / MC-1) protein is Putative 8-amino-7-oxononanoate synthase (bioF).